A 622-amino-acid polypeptide reads, in one-letter code: Threonine--tRNA ligase (622 aa).

The interval 1–141 (MKTLLIHSDY…SRKITTERKE (141 aa)) is editing domain. The catalytic stretch occupies residues 199 to 498 (PHVKYIKEKE…TLENKPPALP (300 aa)). Zn(2+) is bound by residues cysteine 291, histidine 343, and histidine 467.

The protein belongs to the class-II aminoacyl-tRNA synthetase family. Homodimer. Zn(2+) is required as a cofactor.

Its subcellular location is the cytoplasm. It catalyses the reaction tRNA(Thr) + L-threonine + ATP = L-threonyl-tRNA(Thr) + AMP + diphosphate + H(+). Its function is as follows. Catalyzes the attachment of threonine to tRNA(Thr) in a two-step reaction: L-threonine is first activated by ATP to form Thr-AMP and then transferred to the acceptor end of tRNA(Thr). Also edits incorrectly charged L-seryl-tRNA(Thr). In Methanococcus maripaludis (strain C7 / ATCC BAA-1331), this protein is Threonine--tRNA ligase.